A 132-amino-acid chain; its full sequence is Large ribosomal subunit protein uL14 (132 aa).

Belongs to the universal ribosomal protein uL14 family. Part of the 50S ribosomal subunit. Forms a cluster with proteins L3 and L24e, part of which may contact the 16S rRNA in 2 intersubunit bridges.

In terms of biological role, binds to 23S rRNA. Forms part of two intersubunit bridges in the 70S ribosome. The protein is Large ribosomal subunit protein uL14 of Natronomonas pharaonis (strain ATCC 35678 / DSM 2160 / CIP 103997 / JCM 8858 / NBRC 14720 / NCIMB 2260 / Gabara) (Halobacterium pharaonis).